Consider the following 657-residue polypeptide: Protein PSK SIMULATOR 1 (657 aa).

4 stretches are compositionally biased toward polar residues: residues 1–15 (MGGL…NNAP), 26–39 (HLNN…SHSG), 62–76 (ESFS…SHPQ), and 540–556 (RSPN…SHNP). Disordered regions lie at residues 1–80 (MGGL…NIED) and 534–559 (PVKS…PSMG). The N-myristoyl glycine moiety is linked to residue glycine 2.

The protein localises to the nucleus. In terms of biological role, promotes seedling growth probably via the regulation of phytosulfokine (PSK) signaling; PSK are peptide phytohormones acting as growth factors. Together with PSI2 and PSI3, required during vegetative growth and reproduction. May also have a function in carbohydrate metabolism. This Arabidopsis thaliana (Mouse-ear cress) protein is Protein PSK SIMULATOR 1.